The sequence spans 119 residues: Ribonuclease P protein component (119 aa).

It belongs to the RnpA family. Consists of a catalytic RNA component (M1 or rnpB) and a protein subunit.

The enzyme catalyses Endonucleolytic cleavage of RNA, removing 5'-extranucleotides from tRNA precursor.. Its function is as follows. RNaseP catalyzes the removal of the 5'-leader sequence from pre-tRNA to produce the mature 5'-terminus. It can also cleave other RNA substrates such as 4.5S RNA. The protein component plays an auxiliary but essential role in vivo by binding to the 5'-leader sequence and broadening the substrate specificity of the ribozyme. This Escherichia coli O6:H1 (strain CFT073 / ATCC 700928 / UPEC) protein is Ribonuclease P protein component.